The sequence spans 307 residues: Ribonuclease Z (307 aa).

His-63, His-65, Asp-67, His-68, His-141, Asp-208, and His-266 together coordinate Zn(2+). Asp-67 functions as the Proton acceptor in the catalytic mechanism.

Belongs to the RNase Z family. In terms of assembly, homodimer. Requires Zn(2+) as cofactor.

It catalyses the reaction Endonucleolytic cleavage of RNA, removing extra 3' nucleotides from tRNA precursor, generating 3' termini of tRNAs. A 3'-hydroxy group is left at the tRNA terminus and a 5'-phosphoryl group is left at the trailer molecule.. Functionally, zinc phosphodiesterase, which displays some tRNA 3'-processing endonuclease activity. Probably involved in tRNA maturation, by removing a 3'-trailer from precursor tRNA. This is Ribonuclease Z from Chlamydia pneumoniae (Chlamydophila pneumoniae).